The sequence spans 271 residues: Putative phosphoenolpyruvate synthase regulatory protein (271 aa).

Residue 151 to 158 (GVSRSGKT) participates in ADP binding.

It belongs to the pyruvate, phosphate/water dikinase regulatory protein family. PSRP subfamily.

It carries out the reaction [pyruvate, water dikinase] + ADP = [pyruvate, water dikinase]-phosphate + AMP + H(+). It catalyses the reaction [pyruvate, water dikinase]-phosphate + phosphate + H(+) = [pyruvate, water dikinase] + diphosphate. Functionally, bifunctional serine/threonine kinase and phosphorylase involved in the regulation of the phosphoenolpyruvate synthase (PEPS) by catalyzing its phosphorylation/dephosphorylation. In Burkholderia cenocepacia (strain ATCC BAA-245 / DSM 16553 / LMG 16656 / NCTC 13227 / J2315 / CF5610) (Burkholderia cepacia (strain J2315)), this protein is Putative phosphoenolpyruvate synthase regulatory protein.